A 206-amino-acid chain; its full sequence is Small ribosomal subunit protein uS7 (206 aa).

Residues methionine 1–proline 19 are compositionally biased toward acidic residues. Positions methionine 1–lysine 25 are disordered. Serine 2 is subject to N-acetylserine.

It belongs to the universal ribosomal protein uS7 family. Part of the 30S ribosomal subunit.

Its function is as follows. One of the primary rRNA binding proteins, it binds directly to 16S rRNA where it nucleates assembly of the head domain of the 30S subunit. Is located at the subunit interface close to the decoding center. The sequence is that of Small ribosomal subunit protein uS7 from Haloarcula marismortui (strain ATCC 43049 / DSM 3752 / JCM 8966 / VKM B-1809) (Halobacterium marismortui).